The chain runs to 148 residues: Lysozyme C (148 aa).

Positions 1 to 18 (MKAVIILGLVLLSVTVQG) are cleaved as a signal peptide. The C-type lysozyme domain maps to 19 to 148 (KIFERCELAR…VSQYVQGCGV (130 aa)). Cystine bridges form between Cys-24/Cys-146, Cys-48/Cys-134, Cys-83/Cys-99, and Cys-95/Cys-113. Active-site residues include Glu-53 and Asp-71.

The protein belongs to the glycosyl hydrolase 22 family. As to quaternary structure, monomer.

The catalysed reaction is Hydrolysis of (1-&gt;4)-beta-linkages between N-acetylmuramic acid and N-acetyl-D-glucosamine residues in a peptidoglycan and between N-acetyl-D-glucosamine residues in chitodextrins.. Functionally, lysozymes have primarily a bacteriolytic function; those in tissues and body fluids are associated with the monocyte-macrophage system and enhance the activity of immunoagents. The polypeptide is Lysozyme C (LYZ) (Erythrocebus patas (Red guenon)).